The primary structure comprises 2019 residues: Sodium channel protein type 5 subunit alpha (2019 aa).

The Cytoplasmic portion of the chain corresponds to 1-129 (MANFLLPRGT…VRRAAVKILV (129 aa)). Residues 27-66 (RMAEKQARGSATSQESREGLPEEEAPRPQLDLQASKKLPD) are disordered. Ser-36 carries the post-translational modification Phosphoserine. Thr-38 carries the phosphothreonine modification. Over residues 41 to 52 (ESREGLPEEEAP) the composition is skewed to basic and acidic residues. An I repeat occupies 113–420 (VLSPFHPVRR…VVAMAYEEQN (308 aa)). Residues 130-149 (HSLFSMLIMCTILTNCVFMA) traverse the membrane as a helical segment. At 150–157 (QHDPPPWT) the chain is on the extracellular side. The chain crosses the membrane as a helical span at residues 158–179 (KYVEYTFTAIYTFESLVKILAR). The Cytoplasmic segment spans residues 180-188 (GFCLHAFTF). Residues 189–209 (LRDPWNWLDFSVIVMAYTTEF) form a helical membrane-spanning segment. Over 210–216 (VDLGNVS) the chain is Extracellular. The N-linked (GlcNAc...) asparagine glycan is linked to Asn-214. Residues 217–236 (ALRTFRVLRALKTISVISGL) traverse the membrane as a helical segment. At 237–249 (KTIVGALIQSVKK) the chain is on the cytoplasmic side. The chain crosses the membrane as a helical span at residues 250–272 (LADVMVLTVFCLSVFALIGLQLF). The Extracellular portion of the chain corresponds to 273–357 (MGNLRHKCVR…PDHGYTSFDS (85 aa)). Cys-280 and Cys-335 are disulfide-bonded. N-linked (GlcNAc...) asparagine glycans are attached at residues Asn-283, Asn-288, Asn-291, Asn-318, and Asn-328. The pore-forming intramembrane region spans 358–378 (FAWAFLALFRLMTQDCWERLY). Residues 379 to 386 (QQTLRSAG) lie on the Extracellular side of the membrane. The chain crosses the membrane as a helical span at residues 387-413 (KIYMIFFMLVIFLGSFYLVNLILAVVA). The Cytoplasmic portion of the chain corresponds to 414–719 (MAYEEQNQAT…VKFVVMDPFA (306 aa)). Residues Ser-457, Ser-460, Ser-483, and Ser-484 each carry the phosphoserine modification. Disordered stretches follow at residues 461–575 (LEMS…TQGQ) and 610–647 (EATSPGSHLLRPIVLDRPPDTTTPSEEPGGPQMLTPQA). Position 486 is a phosphothreonine (Thr-486). Residues 491–503 (DDRLPKSDSEDGP) show a composition bias toward basic and acidic residues. 2 positions are modified to phosphoserine: Ser-497 and Ser-510. The span at 507 to 528 (NQLSLTHGLSRTSMRPRSSRGS) shows a compositional bias: polar residues. Residue Arg-526 is modified to Dimethylated arginine; alternate. Position 526 is an omega-N-methylarginine; alternate (Arg-526). A phosphoserine mark is found at Ser-539 and Ser-571. Phosphoserine is present on residues Ser-664 and Ser-667. One copy of the II repeat lies at 699–971 (CCPLWMSIKQ…QLALARIQRG (273 aa)). Residues 720 to 737 (DLTITMCIVLNTLFMALE) traverse the membrane as a helical segment. The Extracellular segment spans residues 738–746 (HYNMTAEFE). Asn-740 is a glycosylation site (N-linked (GlcNAc...) asparagine). A helical membrane pass occupies residues 747-769 (EMLQVGNLVFTGIFTAEMTFKII). The Cytoplasmic segment spans residues 770–775 (ALDPYY). The chain crosses the membrane as a helical span at residues 776–796 (YFQQGWNIFDSIIVILSLMEL). The Extracellular portion of the chain corresponds to 797-806 (GLSRMGNLSV). Residue Asn-803 is glycosylated (N-linked (GlcNAc...) asparagine). Residues 807–821 (LRSFRLLRVFKLAKS) form a helical membrane-spanning segment. At 822–838 (WPTLNTLIKIIGNSVGA) the chain is on the cytoplasmic side. Residues 839 to 860 (LGNLTLVLAIIVFIFAVVGMQL) form a helical membrane-spanning segment. Topologically, residues 861–886 (FGKNYSELRHRISDSGLLPRWHMMDF) are extracellular. A glycan (N-linked (GlcNAc...) asparagine) is linked at Asn-864. The segment at residues 887–905 (FHAFLIIFRILCGEWIETM) is an intramembrane region (pore-forming). Over 906–914 (WDCMEVSGQ) the chain is Extracellular. An intrachain disulfide couples Cys-908 to Cys-917. Residues 915–943 (SLCLLVFLLVMVIGNLVVLNLFLALLLSS) traverse the membrane as a helical segment. Over 944 to 1205 (FSADNLTAPD…LRKTCYRIVE (262 aa)) the chain is Cytoplasmic. Residues 1000–1144 (HSQLPSCIAA…EDSYSEGSTA (145 aa)) are disordered. Residues 1017–1036 (EVEKAPPARKETRFEEDKRP) are compositionally biased toward basic and acidic residues. A compositionally biased stretch (acidic residues) spans 1056–1075 (SDTDDQEEDEENSLGTEEEE). Residues 1098 to 1115 (SQVSETTSSEAEASTSQA) show a composition bias toward low complexity. The stretch at 1189–1503 (PGKVWWRLRK…KKYYNAMKKL (315 aa)) is one III repeat. A helical transmembrane segment spans residues 1206 to 1227 (HSWFETFIIFMILLSSGALAFE). The Extracellular segment spans residues 1228–1238 (DIYLEERKTIK). A helical membrane pass occupies residues 1239-1261 (VLLEYADKMFTYVFVLEMLLKWV). The Cytoplasmic portion of the chain corresponds to 1262 to 1270 (AYGFKKYFT). Residues 1271-1293 (NAWCWLDFLIVDVSLVSLVANTL) traverse the membrane as a helical segment. Over 1294-1299 (GFAEMG) the chain is Extracellular. The helical transmembrane segment at 1300-1319 (PIKSLRTLRALRPLRALSRF) threads the bilayer. Topologically, residues 1320 to 1332 (EGMRVVVNALVGA) are cytoplasmic. A helical membrane pass occupies residues 1333-1357 (IPSIMNVLLVCLIFWLIFSIMGVNL). Residues 1358–1402 (FAGKFGRCINQTEGDLPLNYTIVNNKSECESFNVTGELYWTKVKV) lie on the Extracellular side of the membrane. Residues Asn-1367, Asn-1376, Asn-1382, and Asn-1390 are each glycosylated (N-linked (GlcNAc...) asparagine). Residues 1403 to 1424 (NFDNVGAGYLALLQVATFKGWM) constitute an intramembrane region (pore-forming). Residues 1425 to 1447 (DIMYAAVDSRGYEEQPQWEDNLY) are Extracellular-facing. A helical membrane pass occupies residues 1448 to 1472 (MYIYFVVFIIFGSFFTLNLFIGVII). Over 1473-1530 (DNFNQQKKKLGGQDIFMTEEQKKYYNAMKKLGSKKPQKPIPRPLNKYQGFIFDIVTKQ) the chain is Cytoplasmic. Ser-1505 carries the post-translational modification Phosphoserine; by PKC. One copy of the IV repeat lies at 1512-1809 (IPRPLNKYQG…WEKFDPEATQ (298 aa)). A helical membrane pass occupies residues 1531–1549 (AFDVTIMFLICLNMVTMMV). The Extracellular portion of the chain corresponds to 1550–1560 (ETDDQSPEKVN). The chain crosses the membrane as a helical span at residues 1561–1582 (ILAKINLLFVAIFTGECIVKMA). Topologically, residues 1583–1591 (ALRHYYFTN) are cytoplasmic. Residues 1592–1614 (SWNIFDFVVVILSIVGTVLSDII) form a helical membrane-spanning segment. Residues 1615–1621 (QKYFFSP) lie on the Extracellular side of the membrane. Residues 1622 to 1642 (TLFRVIRLARIGRILRLIRGA) traverse the membrane as a helical segment. The Cytoplasmic segment spans residues 1643-1652 (KGIRTLLFAL). A helical transmembrane segment spans residues 1653–1681 (MMSLPALFNIGLLLFLVMFIYSIFGMANF). Residues 1682–1699 (AYVKWEAGIDDMFNFQTF) are Extracellular-facing. Residues 1700–1716 (ANSMLCLFQITTSAGWD) constitute an intramembrane region (pore-forming). Residues 1717 to 1747 (GLLSPILNTGPPYCDPNLPNSNGSRGNCGSP) are Extracellular-facing. Residues 1748–1773 (AVGILFFTTYIIISFLIVVNMYIAII) form a helical membrane-spanning segment. Topologically, residues 1774–2019 (LENFSVATEE…SPDRDRESIV (246 aa)) are cytoplasmic. The tract at residues 1841–1903 (DLPMVSGDRI…ITTTLRRKHE (63 aa)) is interaction with FGF13. Positions 1903-1932 (EEVSATVIQRAFRRHLLQRSVKHASFLFRQ) constitute an IQ domain. The segment covering 1963-1982 (SGPLSSSSISSTSFPPSYDS) has biased composition (low complexity). Positions 1963–2019 (SGPLSSSSISSTSFPPSYDSVTRATSDNLPVRASDYSRSEDLADFPPSPDRDRESIV) are disordered. Positions 1977 to 1980 (PPSY) are interaction with NEDD4, NEDD4L and WWP2.

The protein belongs to the sodium channel (TC 1.A.1.10) family. Nav1.5/SCN5A subfamily. As to quaternary structure, cannot form the same regulatory interactions with beta subunits as other Navs do. Interacts with the PDZ domain of the syntrophin SNTA1, SNTB1 and SNTB2. Interacts with NEDD4, NEDD4L, WWP2 and GPD1L. Interacts with CALM. Interacts with FGF13; the interaction is direct and may regulate SNC5A density at membranes and function. Interacts with FGF12 and FGF14. Interacts with ANK3. Interacts with PKP2 (via N-terminus). Interacts with TMEM233. Interacts with XIRP2; the interaction is required for normal action potential configuration in the heart. Post-translationally, phosphorylation at Ser-1505 by PKC in a highly conserved cytoplasmic loop slows inactivation of the sodium channel and reduces peak sodium currents. Regulated through phosphorylation by CaMK2D. In terms of processing, ubiquitinated by NEDD4L; which promotes its endocytosis. Does not seem to be ubiquitinated by NEDD4 or WWP2. Lacks the cysteine which covalently binds the conotoxin GVIIJ. This cysteine (position 868) is speculated in other sodium channel subunits alpha to be implied in covalent binding with the sodium channel subunit beta-2 or beta-4. Post-translationally, N-glycosylated at Asn-318, probably hinders potential interaction with regulatory subunits. In terms of tissue distribution, expressed in the myocardium (at protein level).

It is found in the cell membrane. It localises to the cytoplasm. Its subcellular location is the perinuclear region. The protein resides in the sarcolemma. The protein localises to the T-tubule. It is found in the cell junction. It carries out the reaction Na(+)(in) = Na(+)(out). Channel inactivation is regulated by intracellular calcium levels. It is a tetrodotoxin-resistant voltage-gated Na(+) channel (Nav). Functionally, pore-forming subunit of Nav1.5, a voltage-gated sodium (Nav) channel that directly mediates the depolarizing phase of action potentials in excitable membranes. Navs, also called VGSCs (voltage-gated sodium channels) or VDSCs (voltage-dependent sodium channels), operate by switching between closed and open conformations depending on the voltage difference across the membrane. In the open conformation they allow Na(+) ions to selectively pass through the pore, along their electrochemical gradient. The influx of Na(+) ions provokes membrane depolarization, initiating the propagation of electrical signals throughout cells and tissues. Nav1.5 is the predominant sodium channel expressed in myocardial cells and it is responsible for the initial upstroke of the action potential in cardiac myocytes, thereby initiating the heartbeat. Required for normal electrical conduction including formation of the infranodal ventricular conduction system and normal action potential configuration, as a result of its interaction with XIRP2. This Mus musculus (Mouse) protein is Sodium channel protein type 5 subunit alpha.